The primary structure comprises 682 residues: MSRKQLALFEPVLLVQALTDAVKKLSPRAQWRNPVMFVVWAGSVLTTLLTLAMVTGQITGSALFTGVISLWLWFTVLFANFAEALAEGRSKAQANSLKGVKKTAFARRLRAPRHDAQADNVPAAELRKGDIVLVKAGDIIPCDGEVIEGGASVDESAITGESAPVIRESGGDFASVTGGTRILSDWLVIACSVNPGETFLDRMIAMVEGAQRRKTPNEIALTILLIALTIVFLLATATLWPFSAWGGNAVSVTVLVALLVCLIPTTIGGLLSAIGVAGMSRMLGANVIATSGRAVEAAGDVDVLLLDKTGTITLGNRQASDFIPARGVDERTLADAAQLASLADETPEGRSIVILAKQRFNLRERDVQSLHATFVPFTAQSRMSGINIDNRMIRKGSVDAIRRHVESNGGHFPADVEQNVENVARLGATPLVVVEGARVLGVIALKDIVKGGIKERFAQLRKMGIKTVMITGDNRLTAAAIAAEAGVDDFLAEATPEAKLALIRQYQAEGRLVAMTGDGTNDAPALAQADVAVAMNSGTQAAKEAGNMVDLDSNPTKLIEVVHIGKQMLMTRGSLTTFSIANDVAKYFAIIPAAFAATYPQLNALNVMGLHSPNSAILSAVIFNALIIIFLIPLALKGVSYKPLSASAMLRRNLWIYGLGGLVVPFIGIKVIDVLLTLLGLA.

4 helical membrane-spanning segments follow: residues 34–54 (PVMF…LAMV), 62–82 (ALFT…ANFA), 219–239 (IALT…TATL), and 254–274 (VLVA…LSAI). The 4-aspartylphosphate intermediate role is filled by D307. ATP is bound by residues D344, E348, 377–384 (FTAQSRMS), and K395. Mg(2+) contacts are provided by D518 and D522. Transmembrane regions (helical) follow at residues 588 to 608 (FAII…LNVM), 616 to 636 (AILS…PLAL), and 662 to 682 (LVVP…LGLA).

It belongs to the cation transport ATPase (P-type) (TC 3.A.3) family. Type IA subfamily. The system is composed of three essential subunits: KdpA, KdpB and KdpC.

The protein localises to the cell inner membrane. It carries out the reaction K(+)(out) + ATP + H2O = K(+)(in) + ADP + phosphate + H(+). Part of the high-affinity ATP-driven potassium transport (or Kdp) system, which catalyzes the hydrolysis of ATP coupled with the electrogenic transport of potassium into the cytoplasm. This subunit is responsible for energy coupling to the transport system and for the release of the potassium ions to the cytoplasm. The chain is Potassium-transporting ATPase ATP-binding subunit from Salmonella schwarzengrund (strain CVM19633).